A 178-amino-acid chain; its full sequence is Caveolin-1 (178 aa).

S2 is subject to N-acetylserine. Residue S2 is modified to Phosphoserine. Positions 2–94 (SGGKYVDSEG…WKASFTTFTV (93 aa)) are required for homooligomerization. At 2–104 (SGGKYVDSEG…TKYWFYRLLS (103 aa)) the chain is on the cytoplasmic side. Residue K5 is modified to N6-acetyllysine; alternate. K5 participates in a covalent cross-link: Glycyl lysine isopeptide (Lys-Gly) (interchain with G-Cter in ubiquitin); alternate. At Y6 the chain carries Phosphotyrosine. The residue at position 9 (S9) is a Phosphoserine. Y14 bears the Phosphotyrosine; by ABL1 mark. Y25 carries the phosphotyrosine modification. Glycyl lysine isopeptide (Lys-Gly) (interchain with G-Cter in ubiquitin) cross-links involve residues K26, K30, K39, K47, and K57. The segment at 82–94 (DGIWKASFTTFTV) is interaction with CAVIN3. An intramembrane region (helical) is located at residues 105 to 125 (ALFGIPMALIWGIYFAILSFL). Topologically, residues 126–178 (HIWAVVPCIKSFLIEIQCISRVYSIYVHTFCDPLFEAIGKIFSNIRINTQKEI) are cytoplasmic. The tract at residues 131 to 142 (VPCIKSFLIEIQ) is interacts with SPRY1, SPRY2, SPRY3 and SPRY4. 3 S-palmitoyl cysteine lipidation sites follow: C133, C143, and C156. Residues 149–160 (SIYVHTFCDPLF) are interacts with SPRY1, SPRY2, and SPRY4. The interval 167–178 (FSNIRINTQKEI) is interacts with SPRY1, SPRY2, SPRY3 and SPRY4.

Belongs to the caveolin family. In terms of assembly, homooligomer. Interacts with GLIPR2. Interacts with NOSTRIN. Interacts with SNAP25 and STX1A. Interacts (via the N-terminus) with DPP4; the interaction is direct. Interacts with CTNNB1, CDH1 and JUP. Interacts with PACSIN2; this interaction induces membrane tubulation. Interacts with SLC7A9. Interacts with BMX and BTK. Interacts with TGFBR1. Interacts with CAVIN3 (via leucine-zipper domain) in a cholesterol-sensitive manner. Interacts with CAVIN1. Interacts with EHD2 in a cholesterol-dependent manner. Forms a ternary complex with UBXN6 and VCP; mediates CAV1 targeting to lysosomes for degradation. Interacts with ABCG1; this interaction regulates ABCG1-mediated cholesterol efflux. Interacts with NEU3; this interaction enhances NEU3 sialidase activity within caveola. Interacts (via C-terminus) with SPRY1, SPRY2 (via C-terminus), SPRY3, and SPRY4. Interacts with IGFBP5; this interaction allows trafficking of IGFBP5 from the plasma membrane to the nucleus. Phosphorylated at Tyr-14 by ABL1 in response to oxidative stress. Post-translationally, ubiquitinated. Undergo monoubiquitination and multi- and/or polyubiquitination. Monoubiquitination of N-terminal lysines promotes integration in a ternary complex with UBXN6 and VCP which promotes oligomeric CAV1 targeting to lysosomes for degradation. Ubiquitinated by ZNRF1; leading to degradation and modulation of the TLR4-mediated immune response.

It is found in the golgi apparatus membrane. The protein localises to the cell membrane. It localises to the membrane. Its subcellular location is the caveola. The protein resides in the membrane raft. Functionally, may act as a scaffolding protein within caveolar membranes. Forms a stable heterooligomeric complex with CAV2 that targets to lipid rafts and drives caveolae formation. Mediates the recruitment of CAVIN proteins (CAVIN1/2/3/4) to the caveolae. Interacts directly with G-protein alpha subunits and can functionally regulate their activity. Involved in the costimulatory signal essential for T-cell receptor (TCR)-mediated T-cell activation. Its binding to DPP4 induces T-cell proliferation and NF-kappa-B activation in a T-cell receptor/CD3-dependent manner. Recruits CTNNB1 to caveolar membranes and may regulate CTNNB1-mediated signaling through the Wnt pathway. Negatively regulates TGFB1-mediated activation of SMAD2/3 by mediating the internalization of TGFBR1 from membrane rafts leading to its subsequent degradation. Binds 20(S)-hydroxycholesterol (20(S)-OHC). This is Caveolin-1 (CAV1) from Bos taurus (Bovine).